The chain runs to 163 residues: 3-isopropylmalate dehydratase small subunit 2 (163 aa).

The protein belongs to the LeuD family. LeuD type 2 subfamily. As to quaternary structure, heterodimer of LeuC and LeuD.

It carries out the reaction (2R,3S)-3-isopropylmalate = (2S)-2-isopropylmalate. Its pathway is amino-acid biosynthesis; L-leucine biosynthesis; L-leucine from 3-methyl-2-oxobutanoate: step 2/4. Catalyzes the isomerization between 2-isopropylmalate and 3-isopropylmalate, via the formation of 2-isopropylmaleate. The sequence is that of 3-isopropylmalate dehydratase small subunit 2 (leuD2) from Pyrococcus abyssi (strain GE5 / Orsay).